Reading from the N-terminus, the 960-residue chain is Leucine-rich repeat receptor-like serine/threonine-protein kinase SKM1 (960 aa).

A signal peptide spans 1–29 (MSTSHHHHHPPYLITTLFFLFLNFSCLHA). Over 30–634 (NELELLLSFK…VRKRSTKSWW (605 aa)) the chain is Extracellular. C61 and C68 are joined by a disulfide. 6 N-linked (GlcNAc...) asparagine glycosylation sites follow: N70, N83, N103, N108, N129, and N134. LRR repeat units lie at residues 71-96 (ISRV…TFRL), 97-120 (PFLQ…IFTT), 122-146 (SPSL…FLPN), 149-168 (TLDL…IGVF), 169-194 (SNLR…NLSR), 196-216 (EFLT…LGKM), 217-240 (KNLK…IGGL), 241-264 (SSLN…LGDL), 265-288 (KKLE…IFSL), 290-312 (NLIS…VAQM), 313-336 (QSLE…VTSL), 338-360 (RLKV…LGKH), 361-384 (NNLT…LCDS), 386-408 (HLTK…LGMC), 409-432 (QSLE…FTKL), 434-454 (LVNF…TWDM), 455-477 (PQLE…FSRS), 478-501 (KRLK…LMTF), 503-525 (EIMD…LSSC), 526-549 (KNLV…FAEF), 550-573 (QVLS…LGNI), and 575-598 (SLVQ…AFLA). An N-linked (GlcNAc...) asparagine glycan is attached at N191. A CLE45 peptide binding motif is present at residues 221–226 (WIYLGY). N-linked (GlcNAc...) asparagine glycans are attached at residues N228 and N252. N-linked (GlcNAc...) asparagine glycosylation occurs at N324. N-linked (GlcNAc...) asparagine glycans are attached at residues N362 and N372. An N-linked (GlcNAc...) asparagine glycan is attached at N537. N580 and N600 each carry an N-linked (GlcNAc...) asparagine glycan. Residues 635–655 (LIITSTFAAFLAVLVSGFFIV) traverse the membrane as a helical segment. The Cytoplasmic segment spans residues 656 to 960 (LVFQRTHNVL…TYLSKILSLA (305 aa)). The region spanning 691–953 (FTVNTILSSL…SSSSSCTTYL (263 aa)) is the Protein kinase domain. At T692 the chain carries Phosphothreonine. ATP is bound by residues 697-705 (LSSLKDQNV) and K717. Y834 carries the post-translational modification Phosphotyrosine.

This sequence belongs to the protein kinase superfamily. Ser/Thr protein kinase family. Self-interacts. Binds to CLE45 present in the pistil, particularly under relatively high temperature (at 30 degrees Celsius). Expressed in pollen grains and roots vascular tissues. Present in roots.

It is found in the cell membrane. The catalysed reaction is L-seryl-[protein] + ATP = O-phospho-L-seryl-[protein] + ADP + H(+). It catalyses the reaction L-threonyl-[protein] + ATP = O-phospho-L-threonyl-[protein] + ADP + H(+). In terms of biological role, receptor with a serine/threonine-protein kinase activity. Together with SKM2, LRR-rich receptor-like kinase (LRR-RLK) required for male fertility by the perception of CLE43 and CLE45 peptides and the transduction of their promoting action in pollen tubes, especially under relatively high temperature (at 30 degrees Celsius), thus conferring tolerance against high temperature probably through the maintenance of mitochondrial activity. Seems to not be involved in the perception of CLE45 peptide in roots. This chain is Leucine-rich repeat receptor-like serine/threonine-protein kinase SKM1, found in Arabidopsis thaliana (Mouse-ear cress).